We begin with the raw amino-acid sequence, 243 residues long: 6-carboxyhexanoate--CoA ligase (243 aa).

Belongs to the BioW family. In terms of assembly, homodimer. Requires Mg(2+) as cofactor.

It carries out the reaction heptanedioate + ATP + CoA = 6-carboxyhexanoyl-CoA + AMP + diphosphate. It participates in metabolic intermediate metabolism; pimeloyl-CoA biosynthesis; pimeloyl-CoA from pimelate: step 1/1. Functionally, catalyzes the transformation of pimelate into pimeloyl-CoA with concomitant hydrolysis of ATP to AMP. This chain is 6-carboxyhexanoate--CoA ligase, found in Thermocrinis albus (strain DSM 14484 / JCM 11386 / HI 11/12).